Consider the following 117-residue polypeptide: Large ribosomal subunit protein bL20c (117 aa).

It belongs to the bacterial ribosomal protein bL20 family.

It localises to the plastid. It is found in the chloroplast. Functionally, binds directly to 23S ribosomal RNA and is necessary for the in vitro assembly process of the 50S ribosomal subunit. It is not involved in the protein synthesizing functions of that subunit. In Aethionema grandiflorum (Persian stone-cress), this protein is Large ribosomal subunit protein bL20c.